We begin with the raw amino-acid sequence, 262 residues long: Cytochrome c oxidase subunit 3 (262 aa).

A run of 6 helical transmembrane segments spans residues Tyr39–Trp59, Gly83–Phe103, Met120–Ala140, Gly163–Ile183, Phe198–Val218, and Ala240–Trp260.

This sequence belongs to the cytochrome c oxidase subunit 3 family. Component of the cytochrome c oxidase (complex IV, CIV), a multisubunit enzyme composed of a catalytic core of 3 subunits and several supernumerary subunits. The complex exists as a monomer or a dimer and forms supercomplexes (SCs) in the inner mitochondrial membrane with ubiquinol-cytochrome c oxidoreductase (cytochrome b-c1 complex, complex III, CIII).

It is found in the mitochondrion inner membrane. The enzyme catalyses 4 Fe(II)-[cytochrome c] + O2 + 8 H(+)(in) = 4 Fe(III)-[cytochrome c] + 2 H2O + 4 H(+)(out). Its function is as follows. Component of the cytochrome c oxidase, the last enzyme in the mitochondrial electron transport chain which drives oxidative phosphorylation. The respiratory chain contains 3 multisubunit complexes succinate dehydrogenase (complex II, CII), ubiquinol-cytochrome c oxidoreductase (cytochrome b-c1 complex, complex III, CIII) and cytochrome c oxidase (complex IV, CIV), that cooperate to transfer electrons derived from NADH and succinate to molecular oxygen, creating an electrochemical gradient over the inner membrane that drives transmembrane transport and the ATP synthase. Cytochrome c oxidase is the component of the respiratory chain that catalyzes the reduction of oxygen to water. Electrons originating from reduced cytochrome c in the intermembrane space (IMS) are transferred via the dinuclear copper A center (CU(A)) of subunit 2 and heme A of subunit 1 to the active site in subunit 1, a binuclear center (BNC) formed by heme A3 and copper B (CU(B)). The BNC reduces molecular oxygen to 2 water molecules using 4 electrons from cytochrome c in the IMS and 4 protons from the mitochondrial matrix. The polypeptide is Cytochrome c oxidase subunit 3 (mt:CoIII) (Drosophila melanogaster (Fruit fly)).